The primary structure comprises 806 residues: Fibroblast growth factor receptor 3 (806 aa).

The first 19 residues, 1–19 (MRAAWGSVWCLCLAAAVGA), serve as a signal peptide directing secretion. Over 20 to 364 (LPAARRRGAE…ELMEMDDSGS (345 aa)) the chain is Extracellular. An Ig-like C2-type 1 domain is found at 24–124 (RRRGAERSGG…VLGNFTVRVT (101 aa)). Cys61 and Cys107 are disulfide-bonded. Residues Asn83, Asn96, and Asn118 are each glycosylated (N-linked (GlcNAc...) asparagine). A disordered region spans residues 121–146 (VRVTDSPSSGDDEDDDDESEDTGVPF). Positions 130 to 141 (GDDEDDDDESED) are enriched in acidic residues. 2 Ig-like C2-type domains span residues 150–238 (PDKM…YQLD) and 247–349 (PILQ…AWLT). An intrachain disulfide couples Cys170 to Cys222. Asn219, Asn256, Asn288, Asn309, and Asn322 each carry an N-linked (GlcNAc...) asparagine glycan. Cys269 and Cys333 form a disulfide bridge. Residues 365–389 (VYAGILSYGTGLVLFILVLVIVIIC) traverse the membrane as a helical segment. Residues 390 to 806 (RMKMPNKKAM…HVPCNGVIRT (417 aa)) lie on the Cytoplasmic side of the membrane. The 290-residue stretch at 466–755 (LTLGKPLGEG…LTMTSTDEYL (290 aa)) folds into the Protein kinase domain. ATP is bound by residues 472–480 (LGEGCFGQV) and Lys502. The Proton acceptor role is filled by Asp611. 4 positions are modified to phosphotyrosine; by autocatalysis: Tyr641, Tyr642, Tyr718, and Tyr754.

The protein belongs to the protein kinase superfamily. Tyr protein kinase family. Fibroblast growth factor receptor subfamily. Monomer. Homodimer after ligand binding. In terms of processing, autophosphorylated. Binding of FGF family members together with heparan sulfate proteoglycan or heparin promotes receptor dimerization and autophosphorylation on tyrosine residues. Autophosphorylation occurs in trans between the two FGFR molecules present in the dimer.

The protein localises to the cell membrane. The catalysed reaction is L-tyrosyl-[protein] + ATP = O-phospho-L-tyrosyl-[protein] + ADP + H(+). Its activity is regulated as follows. Present in an inactive conformation in the absence of bound ligand. Ligand binding leads to dimerization and activation by autophosphorylation on tyrosine residues. In terms of biological role, tyrosine-protein kinase that acts as a cell-surface receptor for fibroblast growth factors and plays an essential role in the regulation of cell proliferation, differentiation and apoptosis. Plays an essential role in the regulation of chondrocyte differentiation, proliferation and apoptosis, and is required for normal skeleton development. Regulates both osteogenesis and postnatal bone mineralization by osteoblasts. Promotes apoptosis in chondrocytes, but can also promote cancer cell proliferation. Phosphorylates PLCG1, CBL and FRS2. Ligand binding leads to the activation of several signaling cascades. Activation of PLCG1 leads to the production of the cellular signaling molecules diacylglycerol and inositol 1,4,5-trisphosphate. Phosphorylation of FRS2 triggers recruitment of GRB2, GAB1, PIK3R1 and SOS1, and mediates activation of RAS, MAPK1/ERK2, MAPK3/ERK1 and the MAP kinase signaling pathway, as well as of the AKT1 signaling pathway. This is Fibroblast growth factor receptor 3 (FGFR3) from Gallus gallus (Chicken).